A 500-amino-acid chain; its full sequence is 4-alpha-glucanotransferase (500 aa).

The protein belongs to the disproportionating enzyme family.

Its subcellular location is the cytoplasm. The enzyme catalyses Transfers a segment of a (1-&gt;4)-alpha-D-glucan to a new position in an acceptor, which may be glucose or a (1-&gt;4)-alpha-D-glucan.. This is 4-alpha-glucanotransferase (malQ) from Thermus thermophilus.